The sequence spans 290 residues: 3-hydroxyacyl-thioester dehydratase Y (290 aa).

A disordered region spans residues 147–169 (FGGARGERPAAPEFPDRHPDARI). A compositionally biased stretch (basic and acidic residues) spans 151–169 (RGERPAAPEFPDRHPDARI). The region spanning 161 to 271 (PDRHPDARID…AVFRTEVAGS (111 aa)) is the MaoC-like domain.

It belongs to the enoyl-CoA hydratase/isomerase family.

It catalyses the reaction a (3R)-3-hydroxyacyl-CoA = a (2E)-enoyl-CoA + H2O. The catalysed reaction is (3R)-hydroxyhexanoyl-CoA = (2E)-hexenoyl-CoA + H2O. The enzyme catalyses (2E)-octenoyl-CoA + H2O = (3R)-hydroxyoctanoyl-CoA. It carries out the reaction (3R)-3-hydroxydecanoyl-CoA = (2E)-decenoyl-CoA + H2O. It catalyses the reaction (3R)-3-hydroxydodecanoyl-CoA = (2E)-dodecenoyl-CoA + H2O. The catalysed reaction is (3R)-hydroxyhexadecanoyl-CoA = (2E)-hexadecenoyl-CoA + H2O. In terms of biological role, shows trans-enoyl-CoA hydratase/3-hydroxyacyl-CoA dehydratase activity. In vitro, can hydrate various enoyl-CoA such as (2E)-hexenoyl-CoA, (2E)-octenoyl-CoA, (2E)-decenoyl-CoA, (2E)-dodecenoyl-CoA and (2E)-hexadecenoyl-CoA. May contribute to the persistence of the tuberculosis infection by inducing COX-2 expression in macrophages through MAPK-NF-kappaB signaling pathway. The chain is 3-hydroxyacyl-thioester dehydratase Y from Mycobacterium tuberculosis (strain ATCC 25618 / H37Rv).